Here is a 260-residue protein sequence, read N- to C-terminus: Carbonic anhydrase 2 (260 aa).

The Alpha-carbonic anhydrase domain maps to 3-259; the sequence is HHWGYDSHNG…LKSREVRASF (257 aa). His-64 (proton donor/acceptor) is an active-site residue. Zn(2+)-binding residues include His-94, His-96, and His-119. 198–199 provides a ligand contact to substrate; that stretch reads TT.

It belongs to the alpha-carbonic anhydrase family. Zn(2+) is required as a cofactor.

Its subcellular location is the cytoplasm. The protein localises to the cell membrane. It catalyses the reaction hydrogencarbonate + H(+) = CO2 + H2O. It carries out the reaction urea = cyanamide + H2O. Inhibited by acetazolamide. Catalyzes the reversible hydration of carbon dioxide. Can also hydrate cyanamide to urea. This Gallus gallus (Chicken) protein is Carbonic anhydrase 2 (CA2).